A 255-amino-acid chain; its full sequence is Ribosomal RNA large subunit methyltransferase E (255 aa).

Residues glycine 50, tryptophan 52, aspartate 68, aspartate 84, and aspartate 108 each coordinate S-adenosyl-L-methionine. The Proton acceptor role is filled by lysine 148. The TRAM domain maps to 195–253; that stretch reads PVRSGEIYDVTVDSVGRTGDGIAMIQGFAVIVKNASPGERLRIKIGPVKQRFAFASILE.

It belongs to the class I-like SAM-binding methyltransferase superfamily. RNA methyltransferase RlmE family.

It localises to the cytoplasm. The catalysed reaction is uridine(2552) in 23S rRNA + S-adenosyl-L-methionine = 2'-O-methyluridine(2552) in 23S rRNA + S-adenosyl-L-homocysteine + H(+). Functionally, specifically methylates the uridine in position 2552 of 23S rRNA at the 2'-O position of the ribose in the fully assembled 50S ribosomal subunit. This Methanothrix thermoacetophila (strain DSM 6194 / JCM 14653 / NBRC 101360 / PT) (Methanosaeta thermophila) protein is Ribosomal RNA large subunit methyltransferase E.